We begin with the raw amino-acid sequence, 146 residues long: uncharacterized protein (146 aa).

The chain crosses the membrane as a helical span at residues 7–27 (FVLSITIVLVILIIIAFIWYN).

It belongs to the asfivirus E146L family.

Its subcellular location is the host membrane. It is found in the virion. This is an uncharacterized protein from Ornithodoros (relapsing fever ticks).